Here is a 402-residue protein sequence, read N- to C-terminus: Triose phosphate/phosphate translocator, non-green plastid, chloroplastic (402 aa).

Residues 1-82 constitute a chloroplast transit peptide; the sequence is MQSSAVFSAS…SLDTNRFKTA (82 aa). Over 83–98 the chain is Chloroplast intermembrane; sequence ATAVPEEGEGSGKMTK. The chain crosses the membrane as a helical span at residues 99-119; the sequence is VLELGLLFAMWYLFNIYFNIY. Residues 118–236 form the EamA domain; sequence IYNKQVLKAL…IVGGVALASV (119 aa). Residues 120–131 are Lumenal-facing; it reads NKQVLKALHAPM. Residues 132-152 form a helical membrane-spanning segment; it reads TVTLVQFAVGSVLITFMWALN. The Chloroplast intermembrane portion of the chain corresponds to 153–209; that stretch reads LYKRPKISAAQLAAILPLAVVHTLGNLFTNMSLGKVSVSFTHTIKAMEPFFSVVLSA. Residues 210–230 form a helical membrane-spanning segment; that stretch reads MFLGEVPTPWVIGSIIPIVGG. Topologically, residues 231 to 278 are lumenal; sequence VALASVTEVSFNWAGFLSAMASNLTNQSRNVLSKKVMVKKDDSLDNIT. A helical transmembrane segment spans residues 279 to 298; it reads LFSIITLMSLFLMAPVTFFS. The Chloroplast intermembrane portion of the chain corresponds to 299 to 374; it reads EGIKFTPSYI…IFFKTPVSPV (76 aa). A helical transmembrane segment spans residues 375–394; the sequence is NAFGTGIALAGVFLYSRVKR. The Lumenal portion of the chain corresponds to 395–402; it reads IKPKPKTA.

This sequence belongs to the TPT transporter family. TPT (TC 2.A.7.9) subfamily. In terms of assembly, homodimer.

Its subcellular location is the plastid. The protein localises to the chloroplast membrane. Mediates the export of fixed carbons from the chloroplasts into the cytosol in the form of triose phosphates. The protein is Triose phosphate/phosphate translocator, non-green plastid, chloroplastic (NGTPT) of Brassica oleracea var. botrytis (Cauliflower).